The primary structure comprises 177 residues: Isopentenyl-diphosphate Delta-isomerase (177 aa).

The Mn(2+) site is built by His22 and His28. In terms of domain architecture, Nudix hydrolase spans 26-160 (LRHMAISVFV…PERFTPWLRI (135 aa)). Residue Cys62 is part of the active site. His64 provides a ligand contact to Mn(2+). A Mg(2+)-binding site is contributed by Glu82. Residues Glu108 and Glu110 each coordinate Mn(2+). Glu110 is an active-site residue.

It belongs to the IPP isomerase type 1 family. It depends on Mg(2+) as a cofactor. Mn(2+) is required as a cofactor.

The protein localises to the cytoplasm. The catalysed reaction is isopentenyl diphosphate = dimethylallyl diphosphate. It functions in the pathway isoprenoid biosynthesis; dimethylallyl diphosphate biosynthesis; dimethylallyl diphosphate from isopentenyl diphosphate: step 1/1. The protein operates within porphyrin-containing compound metabolism; chlorophyll biosynthesis. Catalyzes the 1,3-allylic rearrangement of the homoallylic substrate isopentenyl (IPP) to its highly electrophilic allylic isomer, dimethylallyl diphosphate (DMAPP). In Cereibacter sphaeroides (strain ATCC 17029 / ATH 2.4.9) (Rhodobacter sphaeroides), this protein is Isopentenyl-diphosphate Delta-isomerase.